The chain runs to 103 residues: Non-histone chromosomal protein HMG-14B (103 aa).

Positions 1–103 (MPKRKVAASR…AVEKEEVKSE (103 aa)) are disordered. Positions 29 to 50 (VPDKAEPKAKALAAKDKSENKK) are enriched in basic and acidic residues. Residues 51–60 (AQSKGKKGPK) are compositionally biased toward basic residues. Basic and acidic residues predominate over residues 94-103 (AVEKEEVKSE).

It belongs to the HMGN family.

The protein localises to the nucleus. Functionally, binds to the inner side of the nucleosomal DNA thus altering the interaction between the DNA and the histone octamer. May be involved in the process which maintains transcribable genes in a unique chromatin conformation. This chain is Non-histone chromosomal protein HMG-14B (HMG14), found in Gallus gallus (Chicken).